The following is a 277-amino-acid chain: Thiazole synthase (277 aa).

Catalysis depends on lysine 119, which acts as the Schiff-base intermediate with DXP. 1-deoxy-D-xylulose 5-phosphate-binding positions include glycine 180, 206 to 207 (AG), and 228 to 229 (NT).

The protein belongs to the ThiG family. As to quaternary structure, homotetramer. Forms heterodimers with either ThiH or ThiS.

The protein resides in the plastid. It is found in the chloroplast. It catalyses the reaction [ThiS sulfur-carrier protein]-C-terminal-Gly-aminoethanethioate + 2-iminoacetate + 1-deoxy-D-xylulose 5-phosphate = [ThiS sulfur-carrier protein]-C-terminal Gly-Gly + 2-[(2R,5Z)-2-carboxy-4-methylthiazol-5(2H)-ylidene]ethyl phosphate + 2 H2O + H(+). Its pathway is cofactor biosynthesis; thiamine diphosphate biosynthesis. Its function is as follows. Catalyzes the rearrangement of 1-deoxy-D-xylulose 5-phosphate (DXP) to produce the thiazole phosphate moiety of thiamine. Sulfur is provided by the thiocarboxylate moiety of the carrier protein ThiS. In vitro, sulfur can be provided by H(2)S. This is Thiazole synthase from Pyropia yezoensis (Susabi-nori).